The primary structure comprises 188 residues: CASP-like protein 4B1 (188 aa).

A compositionally biased stretch (basic and acidic residues) spans 1–11; that stretch reads MTNPDKQKPVE. Positions 1-34 are disordered; that stretch reads MTNPDKQKPVEVTDVETAAEKTSEPTPASGTSTI. The Cytoplasmic portion of the chain corresponds to 1 to 46; sequence MTNPDKQKPVEVTDVETAAEKTSEPTPASGTSTITQRWKREDLIKK. Positions 24–34 are enriched in polar residues; the sequence is EPTPASGTSTI. The helical transmembrane segment at 47 to 67 threads the bilayer; the sequence is ASPITRGICLLFSLLAFLIMV. Residues 68–84 are Extracellular-facing; the sequence is SNKHGYGRNFNEYEEYR. Residues 85–105 traverse the membrane as a helical segment; that stretch reads YVLAISIISTLYTAWQTFAHF. Residues 106–120 are Cytoplasmic-facing; it reads SKREFFDRRTSTLVD. A helical membrane pass occupies residues 121-141; the sequence is FSGDQIVAYLLISAASSAIPL. The Extracellular portion of the chain corresponds to 142–156; it reads TNRFREGQDNIFTDS. A helical transmembrane segment spans residues 157 to 177; it reads AASAISMAIFAFVALALSALF. At 178-188 the chain is on the cytoplasmic side; that stretch reads SGYKLSTHSFI.

It belongs to the Casparian strip membrane proteins (CASP) family. Homodimer and heterodimers.

The protein resides in the cell membrane. This is CASP-like protein 4B1 from Arabidopsis lyrata subsp. lyrata (Lyre-leaved rock-cress).